The following is a 201-amino-acid chain: Cytochrome c oxidase assembly protein CtaG (201 aa).

Residues 1–13 (MTDQGENEKKQRR) lie on the Cytoplasmic side of the membrane. A helical; Signal-anchor for type II membrane protein transmembrane segment spans residues 14–36 (SNATIAVACLSFFVCMIGAAYAS). Topologically, residues 37 to 201 (VPLYRIFCQV…KAVGSTRNGG (165 aa)) are periplasmic.

Belongs to the COX11/CtaG family.

The protein resides in the cell inner membrane. Exerts its effect at some terminal stage of cytochrome c oxidase synthesis, probably by being involved in the insertion of the copper B into subunit I. This Brucella suis (strain ATCC 23445 / NCTC 10510) protein is Cytochrome c oxidase assembly protein CtaG.